The sequence spans 256 residues: Imidazole glycerol phosphate synthase subunit HisF (256 aa).

Residues D12 and D131 contribute to the active site.

This sequence belongs to the HisA/HisF family. In terms of assembly, heterodimer of HisH and HisF.

It is found in the cytoplasm. The enzyme catalyses 5-[(5-phospho-1-deoxy-D-ribulos-1-ylimino)methylamino]-1-(5-phospho-beta-D-ribosyl)imidazole-4-carboxamide + L-glutamine = D-erythro-1-(imidazol-4-yl)glycerol 3-phosphate + 5-amino-1-(5-phospho-beta-D-ribosyl)imidazole-4-carboxamide + L-glutamate + H(+). Its pathway is amino-acid biosynthesis; L-histidine biosynthesis; L-histidine from 5-phospho-alpha-D-ribose 1-diphosphate: step 5/9. IGPS catalyzes the conversion of PRFAR and glutamine to IGP, AICAR and glutamate. The HisF subunit catalyzes the cyclization activity that produces IGP and AICAR from PRFAR using the ammonia provided by the HisH subunit. The polypeptide is Imidazole glycerol phosphate synthase subunit HisF (Pseudomonas putida (strain GB-1)).